The following is a 339-amino-acid chain: uncharacterized protein (339 aa).

The segment covering 1-12 (MDIDLNNQTDNN) has biased composition (polar residues). The segment at 1–30 (MDIDLNNQTDNNELIVEDTENPKNPNSTNI) is disordered.

This is an uncharacterized protein from Acanthamoeba polyphaga (Amoeba).